Consider the following 439-residue polypeptide: Diaminopimelate decarboxylase (439 aa).

An N6-(pyridoxal phosphate)lysine modification is found at lysine 66. Residues glycine 248 and 290–293 (EPGR) each bind pyridoxal 5'-phosphate. Substrate-binding residues include arginine 293, arginine 330, and tyrosine 334. Cysteine 361 (proton donor) is an active-site residue. Glutamate 362 and tyrosine 390 together coordinate substrate. Tyrosine 390 is a binding site for pyridoxal 5'-phosphate.

This sequence belongs to the Orn/Lys/Arg decarboxylase class-II family. LysA subfamily. In terms of assembly, homodimer. Pyridoxal 5'-phosphate serves as cofactor.

The catalysed reaction is meso-2,6-diaminopimelate + H(+) = L-lysine + CO2. It participates in amino-acid biosynthesis; L-lysine biosynthesis via DAP pathway; L-lysine from DL-2,6-diaminopimelate: step 1/1. Functionally, specifically catalyzes the decarboxylation of meso-diaminopimelate (meso-DAP) to L-lysine. The polypeptide is Diaminopimelate decarboxylase (Halalkalibacterium halodurans (strain ATCC BAA-125 / DSM 18197 / FERM 7344 / JCM 9153 / C-125) (Bacillus halodurans)).